The primary structure comprises 374 residues: DNA replication and repair protein RecF (374 aa).

30–37 (GENAQGKT) provides a ligand contact to ATP.

The protein belongs to the RecF family.

The protein resides in the cytoplasm. Its function is as follows. The RecF protein is involved in DNA metabolism; it is required for DNA replication and normal SOS inducibility. RecF binds preferentially to single-stranded, linear DNA. It also seems to bind ATP. This is DNA replication and repair protein RecF from Lactiplantibacillus plantarum (strain ATCC BAA-793 / NCIMB 8826 / WCFS1) (Lactobacillus plantarum).